Consider the following 445-residue polypeptide: Histamine H3 receptor (445 aa).

Residues methionine 1–alanine 40 lie on the Extracellular side of the membrane. The N-linked (GlcNAc...) asparagine glycan is linked to asparagine 11. A helical membrane pass occupies residues leucine 41–valine 61. Topologically, residues alanine 62–asparagine 71 are cytoplasmic. The helical transmembrane segment at phenylalanine 72–tyrosine 92 threads the bilayer. At valine 93–lysine 109 the chain is on the extracellular side. A disulfide bond links cysteine 108 and cysteine 189. Residues leucine 110 to serine 130 form a helical membrane-spanning segment. The Cytoplasmic segment spans residues tyrosine 131 to methionine 157. Residues valine 158–leucine 178 traverse the membrane as a helical segment. Residues serine 179 to tryptophan 197 are Extracellular-facing. The helical transmembrane segment at tyrosine 198 to phenylalanine 218 threads the bilayer. The Cytoplasmic portion of the chain corresponds to asparagine 219–serine 359. Disordered regions lie at residues glycine 236–tryptophan 264 and alanine 288–arginine 336. Positions alanine 299 to arginine 312 are enriched in low complexity. A helical transmembrane segment spans residues leucine 360 to isoleucine 380. At arginine 381–phenylalanine 398 the chain is on the extracellular side. The helical transmembrane segment at tryptophan 399–phenylalanine 419 threads the bilayer. Residues arginine 420–lysine 445 are Cytoplasmic-facing. Phosphoserine is present on serine 439.

Belongs to the G-protein coupled receptor 1 family. As to expression, expressed widely and abundantly throughout the brain. Highly expressed in discrete neuronal populations such as pyramidal cells in cerebral cortex or cerebellar Purkinje cells.

It is found in the cell membrane. Functionally, the H3 subclass of histamine receptors could mediate the histamine signals in CNS and peripheral nervous system. Signals through the inhibition of adenylate cyclase and displays high constitutive activity (spontaneous activity in the absence of agonist). This is Histamine H3 receptor (HRH3) from Cavia porcellus (Guinea pig).